Reading from the N-terminus, the 420-residue chain is Gamma-glutamyl phosphate reductase (420 aa).

Belongs to the gamma-glutamyl phosphate reductase family.

The protein localises to the cytoplasm. It carries out the reaction L-glutamate 5-semialdehyde + phosphate + NADP(+) = L-glutamyl 5-phosphate + NADPH + H(+). It participates in amino-acid biosynthesis; L-proline biosynthesis; L-glutamate 5-semialdehyde from L-glutamate: step 2/2. Catalyzes the NADPH-dependent reduction of L-glutamate 5-phosphate into L-glutamate 5-semialdehyde and phosphate. The product spontaneously undergoes cyclization to form 1-pyrroline-5-carboxylate. The sequence is that of Gamma-glutamyl phosphate reductase from Streptococcus pneumoniae (strain JJA).